The chain runs to 567 residues: Laccase-7 (567 aa).

An N-terminal signal peptide occupies residues 1–23 (MEGVRVPIACALILLAISSITSA). Plastocyanin-like domains are found at residues 31–147 (NVQN…PKSG) and 157–310 (KEVP…YGGA). 3 N-linked (GlcNAc...) asparagine glycosylation sites follow: N34, N50, and N77. 2 residues coordinate Cu cation: H81 and H83. An N-linked (GlcNAc...) asparagine glycan is attached at N115. Cu cation-binding residues include H126 and H128. N186, N298, N339, N374, N386, N427, and N450 each carry an N-linked (GlcNAc...) asparagine glycan. The Plastocyanin-like 3 domain occupies 412–551 (DFPDQPPVKF…GMIFVVKNGP (140 aa)). Cu cation contacts are provided by H468, H471, H473, H530, C531, H532, and H536.

It belongs to the multicopper oxidase family. It depends on Cu cation as a cofactor. Predominantly expressed in tissues other than the inflorescence stem.

The protein localises to the secreted. It localises to the extracellular space. The protein resides in the apoplast. It catalyses the reaction 4 hydroquinone + O2 = 4 benzosemiquinone + 2 H2O. In terms of biological role, lignin degradation and detoxification of lignin-derived products. This Arabidopsis thaliana (Mouse-ear cress) protein is Laccase-7 (LAC7).